The following is a 143-amino-acid chain: Mediator of RNA polymerase II transcription subunit 21 (143 aa).

Residues lysine 53 to threonine 130 adopt a coiled-coil conformation.

Belongs to the Mediator complex subunit 21 family. In terms of assembly, component of the Mediator complex.

It is found in the nucleus. Functionally, component of the Mediator complex, a coactivator involved in the regulated transcription of nearly all RNA polymerase II-dependent genes. Mediator functions as a bridge to convey information from gene-specific regulatory proteins to the basal RNA polymerase II transcription machinery. Mediator is recruited to promoters by direct interactions with regulatory proteins and serves as a scaffold for the assembly of a functional preinitiation complex with RNA polymerase II and the general transcription factors. The protein is Mediator of RNA polymerase II transcription subunit 21 (SRB7) of Kluyveromyces lactis (strain ATCC 8585 / CBS 2359 / DSM 70799 / NBRC 1267 / NRRL Y-1140 / WM37) (Yeast).